We begin with the raw amino-acid sequence, 412 residues long: Arginine biosynthesis bifunctional protein ArgJ (412 aa).

The substrate site is built by threonine 158, lysine 184, threonine 195, glutamate 284, asparagine 407, and serine 412. Catalysis depends on threonine 195, which acts as the Nucleophile.

This sequence belongs to the ArgJ family. As to quaternary structure, heterotetramer of two alpha and two beta chains.

The protein resides in the cytoplasm. The catalysed reaction is N(2)-acetyl-L-ornithine + L-glutamate = N-acetyl-L-glutamate + L-ornithine. The enzyme catalyses L-glutamate + acetyl-CoA = N-acetyl-L-glutamate + CoA + H(+). The protein operates within amino-acid biosynthesis; L-arginine biosynthesis; L-ornithine and N-acetyl-L-glutamate from L-glutamate and N(2)-acetyl-L-ornithine (cyclic): step 1/1. It participates in amino-acid biosynthesis; L-arginine biosynthesis; N(2)-acetyl-L-ornithine from L-glutamate: step 1/4. Its function is as follows. Catalyzes two activities which are involved in the cyclic version of arginine biosynthesis: the synthesis of N-acetylglutamate from glutamate and acetyl-CoA as the acetyl donor, and of ornithine by transacetylation between N(2)-acetylornithine and glutamate. This Bartonella quintana (strain Toulouse) (Rochalimaea quintana) protein is Arginine biosynthesis bifunctional protein ArgJ.